The sequence spans 342 residues: Acetoin:2,6-dichlorophenolindophenol oxidoreductase subunit beta (342 aa).

In terms of assembly, tetramer of 2 alpha and 2 beta subunits.

Its pathway is ketone degradation; acetoin degradation. In terms of biological role, catalyzes the 2,6-dichlorophenolindophenol-dependent cleavage of acetoin into acetate and acetaldehyde. In Bacillus subtilis (strain 168), this protein is Acetoin:2,6-dichlorophenolindophenol oxidoreductase subunit beta (acoB).